The chain runs to 128 residues: SH2 domain-containing protein 1A (128 aa).

Positions 6 to 102 (VYHGKISRET…GIVIPLQYPV (97 aa)) constitute an SH2 domain. Residues 67 to 92 (ETAPGVHKRYFRKIKNLISAFQKPDQ) are interaction with FYN SH3 domain. The residue at position 89 (K89) is an N6-acetyllysine. A disordered region spans residues 106 to 128 (SSARSTQGTTGIREDPDVCLKAP). Residues 117 to 128 (IREDPDVCLKAP) show a composition bias toward basic and acidic residues.

As to quaternary structure, interacts with CD84, CD244, LY9, SLAMF1 and FYN. Interacts with NTRK1, NTRK2 and NTRK3.

It localises to the cytoplasm. Functionally, cytoplasmic adapter regulating receptors of the signaling lymphocytic activation molecule (SLAM) family such as SLAMF1, CD244, LY9, CD84, SLAMF6 and SLAMF7. In SLAM signaling seems to cooperate with SH2D1B/EAT-2. Initially it has been proposed that association with SLAMF1 prevents SLAMF1 binding to inhibitory effectors including INPP5D/SHIP1 and PTPN11/SHP-2. However, by simultaneous interactions, recruits FYN which subsequently phosphorylates and activates SLAMF1. Positively regulates CD244/2B4- and CD84-mediated natural killer (NK) cell functions. Can also promote CD48-, SLAMF6 -, LY9-, and SLAMF7-mediated NK cell activation. In the context of NK cell-mediated cytotoxicity enhances conjugate formation with target cells. May also regulate the activity of the neurotrophin receptors NTRK1, NTRK2 and NTRK3. This Macaca mulatta (Rhesus macaque) protein is SH2 domain-containing protein 1A (SH2D1A).